A 164-amino-acid polypeptide reads, in one-letter code: Phosphopantetheine adenylyltransferase (164 aa).

Substrate is bound at residue Ser9. Residues Ser9–Phe10 and His17 each bind ATP. Substrate-binding residues include Lys41, Val78, and Arg92. Residues Gly93–Arg95, Glu103, and Ser128–Thr134 contribute to the ATP site.

This sequence belongs to the bacterial CoaD family. In terms of assembly, homohexamer. The cofactor is Mg(2+).

The protein localises to the cytoplasm. The catalysed reaction is (R)-4'-phosphopantetheine + ATP + H(+) = 3'-dephospho-CoA + diphosphate. The protein operates within cofactor biosynthesis; coenzyme A biosynthesis; CoA from (R)-pantothenate: step 4/5. Its function is as follows. Reversibly transfers an adenylyl group from ATP to 4'-phosphopantetheine, yielding dephospho-CoA (dPCoA) and pyrophosphate. The polypeptide is Phosphopantetheine adenylyltransferase (Rhizobium etli (strain ATCC 51251 / DSM 11541 / JCM 21823 / NBRC 15573 / CFN 42)).